The chain runs to 232 residues: 2,3,4,5-tetrahydropyridine-2,6-dicarboxylate N-acetyltransferase (232 aa).

Belongs to the transferase hexapeptide repeat family. DapH subfamily.

It carries out the reaction (S)-2,3,4,5-tetrahydrodipicolinate + acetyl-CoA + H2O = L-2-acetamido-6-oxoheptanedioate + CoA. Its pathway is amino-acid biosynthesis; L-lysine biosynthesis via DAP pathway; LL-2,6-diaminopimelate from (S)-tetrahydrodipicolinate (acetylase route): step 1/3. In terms of biological role, catalyzes the transfer of an acetyl group from acetyl-CoA to tetrahydrodipicolinate. The chain is 2,3,4,5-tetrahydropyridine-2,6-dicarboxylate N-acetyltransferase from Streptococcus gordonii (strain Challis / ATCC 35105 / BCRC 15272 / CH1 / DL1 / V288).